The chain runs to 193 residues: Acyl-homoserine-lactone synthase (193 aa).

It belongs to the autoinducer synthase family.

The enzyme catalyses a fatty acyl-[ACP] + S-adenosyl-L-methionine = an N-acyl-L-homoserine lactone + S-methyl-5'-thioadenosine + holo-[ACP] + H(+). Functionally, required for the synthesis of OHHL (N-(3-oxohexanoyl)-L-homoserine lactone) also known as VAI or N-(beta-ketocaproyl)homoserine lactone or 3-oxo-N-(tetrahydro-2-oxo-3-furanyl)-hexanamide, an autoinducer molecule which binds to LuxR and thus acts in bioluminescence regulation. The sequence is that of Acyl-homoserine-lactone synthase (luxI) from Aliivibrio fischeri (Vibrio fischeri).